Consider the following 332-residue polypeptide: Ferredoxin--NADP reductase (332 aa).

Residues aspartate 33, glutamine 41, tyrosine 46, alanine 86, methionine 121, aspartate 282, and serine 325 each contribute to the FAD site.

Belongs to the ferredoxin--NADP reductase type 2 family. In terms of assembly, homodimer. FAD is required as a cofactor.

The enzyme catalyses 2 reduced [2Fe-2S]-[ferredoxin] + NADP(+) + H(+) = 2 oxidized [2Fe-2S]-[ferredoxin] + NADPH. The chain is Ferredoxin--NADP reductase from Sulfurisphaera tokodaii (strain DSM 16993 / JCM 10545 / NBRC 100140 / 7) (Sulfolobus tokodaii).